The chain runs to 410 residues: Argininosuccinate synthase (410 aa).

10 to 18 is an ATP binding site; that stretch reads AYSGGLDTS. The L-citrulline site is built by Tyr88 and Ser93. ATP is bound at residue Gly118. L-aspartate is bound by residues Thr120, Asn124, and Asp125. Residue Asn124 coordinates L-citrulline. L-citrulline contacts are provided by Arg128, Ser177, Ser186, Glu262, and Tyr274.

It belongs to the argininosuccinate synthase family. Type 1 subfamily. In terms of assembly, homotetramer.

Its subcellular location is the cytoplasm. The enzyme catalyses L-citrulline + L-aspartate + ATP = 2-(N(omega)-L-arginino)succinate + AMP + diphosphate + H(+). It participates in amino-acid biosynthesis; L-arginine biosynthesis; L-arginine from L-ornithine and carbamoyl phosphate: step 2/3. The protein is Argininosuccinate synthase of Thermoanaerobacter pseudethanolicus (strain ATCC 33223 / 39E) (Clostridium thermohydrosulfuricum).